Here is a 374-residue protein sequence, read N- to C-terminus: 4-hydroxybenzoate polyprenyltransferase, mitochondrial (374 aa).

Residues Met-1–Val-63 constitute a mitochondrion transit peptide. Topologically, residues Val-64–Pro-83 are mitochondrial matrix. A helical transmembrane segment spans residues Ile-84–Gly-104. The Mitochondrial intermembrane segment spans residues Cys-105–Asp-108. The chain crosses the membrane as a helical span at residues Trp-109–Ile-129. Topologically, residues Asn-130 to Asp-153 are mitochondrial matrix. A helical transmembrane segment spans residues Ile-154 to Leu-174. At Leu-175 to His-176 the chain is on the mitochondrial intermembrane side. A helical transmembrane segment spans residues Leu-177–Leu-197. Topologically, residues Met-198–Arg-200 are mitochondrial matrix. The chain crosses the membrane as a helical span at residues Val-201–Trp-221. Topologically, residues Ser-222–Pro-230 are mitochondrial intermembrane. The chain crosses the membrane as a helical span at residues Ala-231–Tyr-251. Residues Ala-252 to Gln-277 are Mitochondrial matrix-facing. A helical transmembrane segment spans residues Trp-278–Gly-298. Residues Gln-299 to Thr-300 are Mitochondrial intermembrane-facing. The chain crosses the membrane as a helical span at residues Leu-301 to Val-321. Over Asp-322 to Lys-332 the chain is Mitochondrial matrix. Residues Phe-333 to Tyr-353 traverse the membrane as a helical segment. Residues Lys-354–Ser-374 are Mitochondrial intermembrane-facing.

The protein belongs to the UbiA prenyltransferase family. The cofactor is Mg(2+).

It localises to the mitochondrion inner membrane. The catalysed reaction is an all-trans-polyprenyl diphosphate + 4-hydroxybenzoate = a 4-hydroxy-3-(all-trans-polyprenyl)benzoate + diphosphate. It catalyses the reaction all-trans-decaprenyl diphosphate + 4-hydroxybenzoate = 4-hydroxy-3-(all-trans-decaprenyl)benzoate + diphosphate. The enzyme catalyses all-trans-nonaprenyl diphosphate + 4-hydroxybenzoate = 4-hydroxy-3-(all-trans-nonaprenyl)benzoate + diphosphate. It functions in the pathway cofactor biosynthesis; ubiquinone biosynthesis. In terms of biological role, mediates the second step in the final reaction sequence of coenzyme Q (CoQ) biosynthesis. Catalyzes the prenylation of para-hydroxybenzoate (PHB) with an all-trans polyprenyl group (such as all-trans-nonaprenyl diphosphate). The length of the polyprenyl side chain varies depending on the species, in humans, the side chain is comprised of 10 isoprenyls producing CoQ10 (also known as ubiquinone), whereas rodents predominantly generate CoQ9. However, this specificity is not complete, human tissues have low amounts of CoQ9 and rodent organs contain some CoQ10. Plays a central role in the biosynthesis of CoQ9. CoQ9 is a vital molecule that transports electrons from mitochondrial respiratory chain complexes. CoQs also function as cofactors for uncoupling protein and plays a role as regulator of the extracellularly-induced ceramide-dependent apoptotic pathway. Regulates mitochondrial permeability transition pore (mPTP) opening and ROS production (pivotal events in cell death) in a tissue specific manner. The sequence is that of 4-hydroxybenzoate polyprenyltransferase, mitochondrial from Rattus norvegicus (Rat).